We begin with the raw amino-acid sequence, 129 residues long: Replication initiation control protein YabA (129 aa).

Residues His-103, Cys-105, Cys-119, and Cys-122 each contribute to the Zn(2+) site.

Belongs to the YabA family. In terms of assembly, homotetramer. Interacts with both DnaA and DnaN, acting as a bridge between these two proteins. The cofactor is Zn(2+).

It localises to the cytoplasm. Its subcellular location is the nucleoid. Its function is as follows. Involved in control of chromosome replication initiation. Inhibits the cooperative binding of DnaA to the oriC region, thus negatively regulating initiation of chromosome replication. Inhibits the ability of DnaA-ATP to form a helix on DNA; does not disassemble preformed DnaA-DNA helices. Decreases the residence time of DnaA on the chromosome at its binding sites (oriC, replication forks and promoter-binding sites). Tethers DnaA to the replication machinery via the DNA polymerase beta sliding clamp subunit (dnaN). Associates with oriC and other DnaA targets on the chromosome in a DnaA-dependent manner. The chain is Replication initiation control protein YabA from Listeria innocua serovar 6a (strain ATCC BAA-680 / CLIP 11262).